A 350-amino-acid chain; its full sequence is (S)-tetrahydroprotoberberine N-methyltransferase (350 aa).

Positions 91, 129, 153, 157, 179, 180, and 195 each coordinate S-adenosyl-L-methionine. Cys325 is an active-site residue.

The protein belongs to the CFA/CMAS family. In terms of assembly, homodimer.

It is found in the cytoplasm. The catalysed reaction is (S)-stylopine + S-adenosyl-L-methionine = (S)-cis-N-methylstylopine + S-adenosyl-L-homocysteine. It catalyses the reaction (S)-tetrahydropalmatine + S-adenosyl-L-methionine = (S)-cis-N-methyltetrahydropalmatine + S-adenosyl-L-homocysteine. The enzyme catalyses (S)-canadine + S-adenosyl-L-methionine = (S)-cis-N-methylcanadine + S-adenosyl-L-homocysteine. It carries out the reaction (S)-scoulerine + S-adenosyl-L-methionine = (S)-cis-N-methylscoulerine + S-adenosyl-L-homocysteine. The protein operates within alkaloid biosynthesis. N-methyltransferase with a broad substrate range, accepting protoberberine alkaloids (R,S)-stylopine, (R,S)-nandinine and (R,S)-tetrahydropalmatine, and to a lesser extent (R,S)-canadine, (R,S)-tetrahydrogroenlandicine (cheilanthifoline) and (S)-scoulerine. This is (S)-tetrahydroprotoberberine N-methyltransferase from Eschscholzia californica (California poppy).